Consider the following 357-residue polypeptide: UPF0283 membrane protein BMEA_A1074 (357 aa).

The segment at 1 to 36 (MSDKTPRKPTAFRLEQPARVSAASEQEEPRRPRAVK) is disordered. A compositionally biased stretch (basic and acidic residues) spans 27 to 36 (EEPRRPRAVK). The next 2 membrane-spanning stretches (helical) occupy residues 78-98 (ILFGALGILVSFAIGIWTEDL) and 109-129 (LGWTALGVAMVALAAFAAIIL).

Belongs to the UPF0283 family.

It localises to the cell inner membrane. This chain is UPF0283 membrane protein BMEA_A1074, found in Brucella melitensis biotype 2 (strain ATCC 23457).